We begin with the raw amino-acid sequence, 869 residues long: Histone deacetylase 4 (869 aa).

3 disordered regions span residues Met-1–Ser-25, Ser-128–Gln-167, and Arg-180–Val-218. Polar residues predominate over residues Glu-184–Gly-202. Position 251 is a phosphoserine (Ser-251). The tract at residues Cys-460–Asp-802 is histone deacetylase. Residue His-608 is part of the active site.

It belongs to the histone deacetylase family. HD type 2 subfamily. In terms of assembly, interacts with mef-2. Post-translationally, phosphorylated by serine/threonine-protein kinase kin-29 at Ser-251; the phosphorylation inhibits repression of transcription by mef-2. May be phosphorylated by either cyclic-AMP dependent or cyclic-GMP dependent protein kinases. Expressed in body-wall muscle cells, hypodermal seam cells and neuronal cells including sensory amphid neuronal processes, the nerve ring, ventral nerve cords and motor neuronal commissures.

It is found in the nucleus. The catalysed reaction is N(6)-acetyl-L-lysyl-[histone] + H2O = L-lysyl-[histone] + acetate. Responsible for the deacetylation of lysine residues on the N-terminal part of the core histones (H2A, H2B, H3 and H4). Histone deacetylation gives a tag for epigenetic repression and plays an important role in transcriptional regulation, cell cycle progression and developmental events. Histone deacetylases act via the formation of large multiprotein complexes. Involved in transduction of sensory signals, together with egl-4, kin-29 and mef-2; binding to transcription factor mef-2 enables negative modulation of chemoreceptor gene expression in chemosensory neurons. May be involved in muscle development. The chain is Histone deacetylase 4 (hda-4) from Caenorhabditis elegans.